Here is a 414-residue protein sequence, read N- to C-terminus: Gamma-glutamyl phosphate reductase (414 aa).

Belongs to the gamma-glutamyl phosphate reductase family.

Its subcellular location is the cytoplasm. It carries out the reaction L-glutamate 5-semialdehyde + phosphate + NADP(+) = L-glutamyl 5-phosphate + NADPH + H(+). It participates in amino-acid biosynthesis; L-proline biosynthesis; L-glutamate 5-semialdehyde from L-glutamate: step 2/2. Its function is as follows. Catalyzes the NADPH-dependent reduction of L-glutamate 5-phosphate into L-glutamate 5-semialdehyde and phosphate. The product spontaneously undergoes cyclization to form 1-pyrroline-5-carboxylate. The protein is Gamma-glutamyl phosphate reductase of Francisella philomiragia subsp. philomiragia (strain ATCC 25017 / CCUG 19701 / FSC 153 / O#319-036).